The primary structure comprises 1834 residues: Sodium channel protein type 4 subunit alpha (1834 aa).

The Cytoplasmic portion of the chain corresponds to 1–131 (MASSSLPNLV…RSAIKVLIHS (131 aa)). An I repeat occupies 113-448 (MLSPFSIIRR…VVTMAYAEQN (336 aa)). Residues 132 to 150 (LFSMFIMITILPNCVVMTM) form a helical membrane-spanning segment. The Extracellular segment spans residues 151–157 (SDPPPWP). A helical transmembrane segment spans residues 158 to 178 (IHVENTFTGINTFESLIKMLA). Topologically, residues 179 to 192 (RGFCIDDFTFLRDP) are cytoplasmic. The chain crosses the membrane as a helical span at residues 193–210 (WNWLDFSVIMMAYLTEFV). Topologically, residues 211-216 (DLGNIS) are extracellular. N-linked (GlcNAc...) asparagine glycosylation occurs at Asn214. A helical transmembrane segment spans residues 217-233 (ALRTFRVLRALKTITVI). The Cytoplasmic segment spans residues 234–252 (PGLKTIVGALIQSVKKLSD). The chain crosses the membrane as a helical span at residues 253–272 (VMILTVFCLSVFALVGLQLF). Residues 273 to 385 (MGNLRQKCVR…PNYGYTSHDT (113 aa)) are Extracellular-facing. Residues Cys280 and Cys354 are joined by a disulfide bond. 7 N-linked (GlcNAc...) asparagine glycosylation sites follow: Asn288, Asn291, Asn297, Asn303, Asn309, Asn327, and Asn356. Cysteines 363 and 369 form a disulfide. The segment at residues 386–410 (FSWAFLALFRLMIQDYWENLFQLTL) is an intramembrane region (pore-forming). The Extracellular segment spans residues 411-417 (RAAGKTY). Residues 418–438 (MIFFVVIIFLGSFYLINLILA) traverse the membrane as a helical segment. At 439–572 (VVTMAYAEQN…NIIHLIVMDP (134 aa)) the chain is on the cytoplasmic side. Residues 486–525 (EGGEAGGDPAHSKDCNGSLDTSPGEKGPPRQSCSADSGVS) are disordered. The stretch at 554–826 (CCTPWVKFKN…QISSWPIKLG (273 aa)) is one II repeat. A helical transmembrane segment spans residues 573–591 (FVDLGITICIVLNTLFMAM). The Extracellular segment spans residues 592–602 (EHYPMTEHFDK). Residues 603–622 (VLTVGNLVFTGIFTAEMVLK) traverse the membrane as a helical segment. The Cytoplasmic portion of the chain corresponds to 623-636 (LIALDPYEYFQQGW). Residues 637 to 656 (NVFDSIIVTLSWVELGLVNV) traverse the membrane as a helical segment. Topologically, residues 657–658 (KG) are extracellular. A helical membrane pass occupies residues 659–676 (LSVLRSFRLVRSLKLAKS). Residues 677-692 (WPTLNMFIRIIGNSGG) lie on the Cytoplasmic side of the membrane. Residues 693-711 (GLGNLTLVLAIIVVNFSVV) traverse the membrane as a helical segment. Residues 712-740 (GMQLFGKNYKECVCKNASDCALPRWKMCD) lie on the Extracellular side of the membrane. Cys725 and Cys731 are oxidised to a cystine. The segment at residues 741–761 (FFHSFLIVLRILCGEWIEPMW) is an intramembrane region (pore-forming). At 762–772 (GFMEVAGQAMF) the chain is on the extracellular side. The chain crosses the membrane as a helical span at residues 773–791 (LTVLLMVMVNGNLVDLDLF). At 792–1029 (LALLLNPLNS…ACFKIVEHHW (238 aa)) the chain is on the cytoplasmic side. Disordered regions lie at residues 853 to 886 (GDPGEAGEAGEAEESAPEDEKKEPPPEDDDKDLK) and 929 to 989 (SDLE…QPEE). Over residues 860–869 (EAGEAEESAP) the composition is skewed to acidic residues. A compositionally biased stretch (basic and acidic residues) spans 870-886 (EDEKKEPPPEDDDKDLK). 2 stretches are compositionally biased toward acidic residues: residues 929–945 (SDLEMPTEEETDTFSEP) and 972–989 (EDPEEQAEENPEGEQPEE). An III repeat occupies 1010–1323 (RGKMWWTLRR…KKYYNAMKKL (314 aa)). Residues 1030 to 1047 (FKTFNSSLILLNSGTLAF) form a helical membrane-spanning segment. At 1048–1060 (EDIYIEQRRVIRT) the chain is on the extracellular side. Residues 1061 to 1079 (ILEYADKVFTYIFIMEMLL) form a helical membrane-spanning segment. Residues 1080 to 1093 (KWVAYGFKVYFTNA) are Cytoplasmic-facing. The chain crosses the membrane as a helical span at residues 1094–1112 (WCWLDFLIVDVSIISLVAN). Residues 1113–1120 (WLGYSELG) lie on the Extracellular side of the membrane. The helical transmembrane segment at 1121-1139 (PIKSLRTLRALRPLRALSR) threads the bilayer. The Cytoplasmic segment spans residues 1140–1156 (FEGMRVVVNALLGAIPS). Residues 1157–1176 (IMNVLLVCLIFWVIFSIMGV) form a helical membrane-spanning segment. Residues 1177-1227 (NLFAAKIYYFINTTTSERFDISGVNNKSECESLIHTGQVRWLNVKVNYDNV) lie on the Extracellular side of the membrane. N-linked (GlcNAc...) asparagine glycans are attached at residues Asn1188 and Asn1202. Residues 1228-1249 (GLGYLSLLQVATFKGWMDIMYS) constitute an intramembrane region (pore-forming). Residues 1250–1266 (AVDSREQEEQPQYEVNI) are Extracellular-facing. A helical membrane pass occupies residues 1267-1288 (YMYLYFVIFIIFGSFFTINSLI). Topologically, residues 1289–1351 (RLIIVNFNQQ…MVYDFVTKQV (63 aa)) are cytoplasmic. The important for rapid channel inactivation stretch occupies residues 1307 to 1309 (IFM). An IV repeat occupies 1332–1630 (IPRPQNKIQG…WEKFGPDATQ (299 aa)). The helical transmembrane segment at 1352–1369 (FDITIMILICLNMVTMMV) threads the bilayer. At 1370–1380 (ETDDQSQLKVD) the chain is on the extracellular side. Residues 1381–1399 (ILYNINMVFIIVFTGECVL) form a helical membrane-spanning segment. Residues 1400 to 1411 (KMFALRQNYFTV) lie on the Cytoplasmic side of the membrane. A helical membrane pass occupies residues 1412–1429 (GWNIFDFVVVILSIVGLA). The Extracellular segment spans residues 1430–1442 (LSDLIQKYFVSPT). A helical transmembrane segment spans residues 1443 to 1459 (LFRVIRLARIGRVLRLI). The Cytoplasmic segment spans residues 1460–1478 (RGAKGIRTLLFALMMSLPA). A helical membrane pass occupies residues 1479–1496 (LFNIGLLLILVMFIYSIF). At 1497 to 1518 (GMSNFAYVKKESGIDDMFNFET) the chain is on the extracellular side. An intramembrane region (pore-forming) is located at residues 1519-1541 (FGNSIICLFEITTSAGWDGLLNP). Residues 1542–1571 (ILNSGPPDCDPTLENPGTSVRGDCGNPSIG) are Extracellular-facing. The cysteines at positions 1550 and 1565 are disulfide-linked. The chain crosses the membrane as a helical span at residues 1572 to 1594 (ICFFCSYIIISFLIVVNMYIAII). Residues 1595-1834 (LENFNVATEE…LHPGVKESLV (240 aa)) are Cytoplasmic-facing. The 30-residue stretch at 1724 to 1753 (EEVCAIKIQRAYRRHLLQRSVKQASYMYRH) folds into the IQ domain. Residues 1776–1834 (MYGRENGNSGVQNKGEERGSTGDAGPTMGLTPINPSDSALPPSPPPGLPLHPGVKESLV) are disordered.

This sequence belongs to the sodium channel (TC 1.A.1.10) family. Nav1.4/SCN4A subfamily. In terms of assembly, the Nav1.4 voltage-gated sodium channel consists of an ion-conducting alpha subunit SCN4A which is functional on its own and a regulatory beta subunit SCN1B. SCN1B strongly enhances the presence of SCN4A at the cell surface. SCN1B is also required for rapid channel inactivation and recovery after inactivation. It prevents the decrease of channel activity in response to repetitive, high-frequency depolarizations. Interacts with the syntrophins SNTA1, SNTB1 and SNTB2 (via PDZ domain); probably links SCN4A to the actin cytoskeleton and the extracellular matrix via the dystrophin-associated protein complex and regulates its localization in muscle cells. Interacts with TMEM233; probable regulator of the channel.

The protein resides in the cell membrane. The enzyme catalyses Na(+)(in) = Na(+)(out). In terms of biological role, pore-forming subunit of Nav1.4, a voltage-gated sodium (Nav) channel that directly mediates the depolarizing phase of action potentials in excitable membranes. Navs, also called VGSCs (voltage-gated sodium channels) or VDSCs (voltage-dependent sodium channels), operate by switching between closed and open conformations depending on the voltage difference across the membrane. In the open conformation they allow Na(+) ions to selectively pass through the pore, along their electrochemical gradient. The influx of Na+ ions provokes membrane depolarization, initiating the propagation of electrical signals throughout cells and tissues. Highly expressed in skeletal muscles, Nav1.4 generates the action potential crucial for muscle contraction. The chain is Sodium channel protein type 4 subunit alpha from Equus caballus (Horse).